Here is a 334-residue protein sequence, read N- to C-terminus: Protein-methionine-sulfoxide reductase catalytic subunit MsrP (334 aa).

The segment at residues 1–44 is a signal peptide (tat-type signal); that stretch reads MKKNQFLKESDVTAESVFFMKRRQVLKALGISAAAFSLPHAAHA. Mo-molybdopterin contacts are provided by residues asparagine 88, 91-92, cysteine 146, threonine 181, asparagine 233, arginine 238, and 249-251; these read YE and GIK.

This sequence belongs to the MsrP family. In terms of assembly, heterodimer of a catalytic subunit (MsrP) and a heme-binding subunit (MsrQ). It depends on Mo-molybdopterin as a cofactor. In terms of processing, predicted to be exported by the Tat system. The position of the signal peptide cleavage has not been experimentally proven.

The protein localises to the periplasm. It carries out the reaction L-methionyl-[protein] + a quinone + H2O = L-methionyl-(S)-S-oxide-[protein] + a quinol. The catalysed reaction is L-methionyl-[protein] + a quinone + H2O = L-methionyl-(R)-S-oxide-[protein] + a quinol. Functionally, part of the MsrPQ system that repairs oxidized periplasmic proteins containing methionine sulfoxide residues (Met-O), using respiratory chain electrons. Thus protects these proteins from oxidative-stress damage caused by reactive species of oxygen and chlorine generated by the host defense mechanisms. MsrPQ is essential for the maintenance of envelope integrity under bleach stress, rescuing a wide series of structurally unrelated periplasmic proteins from methionine oxidation, including the primary periplasmic chaperone SurA and the lipoprotein Pal. The catalytic subunit MsrP is non-stereospecific, being able to reduce both (R-) and (S-) diastereoisomers of methionine sulfoxide. The chain is Protein-methionine-sulfoxide reductase catalytic subunit MsrP from Escherichia coli O6:H1 (strain CFT073 / ATCC 700928 / UPEC).